Here is an 803-residue protein sequence, read N- to C-terminus: MTDSPFLELWQSRTVAIRERLGIGDQPNDSYCYNSAKNSTVLQGVTFGGIPTVLFIDVSCFLFLIVVFSIIRRKFWDYGRIALVSEGNSESRFRRLSSSSSGQQDFESELGCCSWLTAIFRLHDDQILEWCGEDAIHYLSFQRHIIFLLVVVSCLSLCIILPVNLSGDLLDKDPYSFGRTTIANLQTDNNLLWLHTIFAILYLILTVVFMRHHTQSIKYKEESLVRRTLFVTGLPKDAKKETVESHFRDAYPTCEVVEVQLCYNVAKLIYLCKERKKTEKSLTYYTNLQVKTGQRTFINPKPCGQFCCCEVRGCEWEDAISYYTRMKDRLMERITEEECRVQDQPLGMAFVTFQEKSMATYILKDFNACKCQGLQCKGEPQPSSHSRELGISRWSVTFAAYPEDICWKNLSIQGFRWWFQWLGINFILFVGLFFLTTPSIILSTMDKFNVTKPIHALNDPIISQFFPTLLLWSFSALLPTIVCYSTLLESHWTKSGENRIMMTKVYIFLIFMVLILPSLGLTSLDFFFRWLFDKTSSEASIRLECVFLPDQGAFFVNYVIASAFIGNGMELLRLPGLILYTFRMVMAKTAADRRNVKQHQAFEYEFGAMYAWMLCVFTVIMAYSITCPIIVPFGLIYILLKHMVDRHNLYFAYLPAKLEKRIHFAAVNQALAAPILCLFWLYFFSFLRLGLKAPLTLFTFLVLLLTILVCLAYTCFGCFRHLSPLNYKTEESANDKGNEAGAHVPPPFTPYVPRILNSSSSEKTALSPQQQTYGAINNISGTVAGQGLAQSPEDSVAAADQED.

Topologically, residues 1 to 51 are extracellular; that stretch reads MTDSPFLELWQSRTVAIRERLGIGDQPNDSYCYNSAKNSTVLQGVTFGGIP. A helical transmembrane segment spans residues 52-74; sequence TVLFIDVSCFLFLIVVFSIIRRK. Residues 75-133 are Cytoplasmic-facing; the sequence is FWDYGRIALVSEGNSESRFRRLSSSSSGQQDFESELGCCSWLTAIFRLHDDQILEWCGE. The helical transmembrane segment at 134–166 threads the bilayer; it reads DAIHYLSFQRHIIFLLVVVSCLSLCIILPVNLS. At 167–190 the chain is on the extracellular side; that stretch reads GDLLDKDPYSFGRTTIANLQTDNN. Residues 191–216 form a helical membrane-spanning segment; it reads LLWLHTIFAILYLILTVVFMRHHTQS. The Cytoplasmic portion of the chain corresponds to 217 to 415; the sequence is IKYKEESLVR…CWKNLSIQGF (199 aa). The tract at residues 218–413 is intracellular linker IL2; confers mechanosensitivity; that stretch reads KYKEESLVRR…DICWKNLSIQ (196 aa). A helical transmembrane segment spans residues 416-443; sequence RWWFQWLGINFILFVGLFFLTTPSIILS. Residues 444–461 are Extracellular-facing; it reads TMDKFNVTKPIHALNDPI. The chain crosses the membrane as a helical span at residues 462 to 489; it reads ISQFFPTLLLWSFSALLPTIVCYSTLLE. Residues 490–494 are Cytoplasmic-facing; the sequence is SHWTK. The helical transmembrane segment at 495–531 threads the bilayer; that stretch reads SGENRIMMTKVYIFLIFMVLILPSLGLTSLDFFFRWL. At 532–553 the chain is on the extracellular side; sequence FDKTSSEASIRLECVFLPDQGA. Residues 554 to 585 form a helical membrane-spanning segment; it reads FFVNYVIASAFIGNGMELLRLPGLILYTFRMV. The tract at residues 554–585 is gating helix; that stretch reads FFVNYVIASAFIGNGMELLRLPGLILYTFRMV. Residues 586–605 lie on the Cytoplasmic side of the membrane; sequence MAKTAADRRNVKQHQAFEYE. Residues 606–623 form a helical membrane-spanning segment; it reads FGAMYAWMLCVFTVIMAY. The Extracellular portion of the chain corresponds to 624–627; it reads SITC. A helical membrane pass occupies residues 628–650; that stretch reads PIIVPFGLIYILLKHMVDRHNLY. The Cytoplasmic segment spans residues 651-660; that stretch reads FAYLPAKLEK. A helical transmembrane segment spans residues 661–688; sequence RIHFAAVNQALAAPILCLFWLYFFSFLR. Residues 689–693 are Extracellular-facing; the sequence is LGLKA. Residues 694 to 708 form a helical membrane-spanning segment; sequence PLTLFTFLVLLLTIL. The Cytoplasmic segment spans residues 709–803; that stretch reads VCLAYTCFGC…DSVAAADQED (95 aa).

Belongs to the CSC1 (TC 1.A.17) family. (Microbial infection) Interacts with H.contortus GAL-1 (via domain galectin 1).

It localises to the lysosome membrane. The protein localises to the early endosome membrane. The protein resides in the cell membrane. It catalyses the reaction Ca(2+)(in) = Ca(2+)(out). Its function is as follows. Mechanosensitive cation channel with low conductance and high activation threshold. In contrast to TMEM63B, does not show phospholipid scramblase activity. Acts as a regulator of lysosomal morphology by mediating lysosomal mechanosensitivity. Important for the baby's first breath and respiration throughout life. Upon lung inflation conducts cation currents in alveolar type 1 and 2 cells triggering lamellar body exocytosis and surfactant secretion into airspace. Also acts as an osmosensitive cation channel preferentially activated by hypotonic stress. Functionally, (Microbial infection) Involved in the immunomodulatory effects exerted by H.contortus GAL-1 on host peripheral blood mononuclear cells to down-regulate host immune response. The chain is Mechanosensitive cation channel TMEM63A (TMEM63A) from Capra hircus (Goat).